The primary structure comprises 670 residues: MKESIQVTLEQLRETLHYHAVRYYVEDSPEIPDVEYDRLMQQLLKIEDENPELVTVDSPSQRVGGQPLDGFTQVTHEIPMLSLDNAFSDDDLDAFNKRMSDRAPTANLETFCCEPKLDGLAVSLLYVNGTLVQAATRGDGATGENITENVRTISSIPLKLQGEGWPERIEVRGEVFMPKAGFDKLNEMALKKGEKVFVNPRNAAAGSLRQLDSRITAKRPLAFYAYSVGVVQGAELSNSHYQRFLQLKAWGLPMCPETKQLSSLEDVKAYYQDIMTRRDTLAYEIDGVVIKVDDIAAQETLGFVARAPRWAIAYKFPAQEEITLLNDVEFQVGRTGAITPVAKLEPIFVGGVTVSNATLHNADEIARLGVKVGDSVIIRRAGDVIPQIVAVVQDRRPETAKDIVFPDACPVCNSAVERVEGEAVARCTGGLVCQAQRKEALKHFVSRKALDVDGLGVKVIEQLVDREMVETPADLFKLSAGVITVLDRMGPKSAQNVVSALNKAKDTTLARFLYSLGIREVGEATAMNLAQHFKTLELVQAATHEQLVEVSDIGDIVASHLTSFFSQEKNRAVVDQLIELGVNWPAIEAVADDQELPLEGKVVVLTGSLSKLGRSEAKAALQALGAKVTGSVSKKTDILFAGEAAGSKLTKAQDLGIEIRTEEDLIALIS.

Residues 33–37, 82–83, and glutamate 114 each bind NAD(+); these read DVEYD and SL. The active-site N6-AMP-lysine intermediate is lysine 116. The NAD(+) site is built by arginine 137, glutamate 174, lysine 291, and lysine 315. Residues cysteine 409, cysteine 412, cysteine 427, and cysteine 433 each contribute to the Zn(2+) site. Positions 593 to 670 constitute a BRCT domain; sequence DQELPLEGKV…TEEDLIALIS (78 aa).

Belongs to the NAD-dependent DNA ligase family. LigA subfamily. Requires Mg(2+) as cofactor. Mn(2+) serves as cofactor.

It carries out the reaction NAD(+) + (deoxyribonucleotide)n-3'-hydroxyl + 5'-phospho-(deoxyribonucleotide)m = (deoxyribonucleotide)n+m + AMP + beta-nicotinamide D-nucleotide.. In terms of biological role, DNA ligase that catalyzes the formation of phosphodiester linkages between 5'-phosphoryl and 3'-hydroxyl groups in double-stranded DNA using NAD as a coenzyme and as the energy source for the reaction. It is essential for DNA replication and repair of damaged DNA. In Vibrio atlanticus (strain LGP32) (Vibrio splendidus (strain Mel32)), this protein is DNA ligase.